Reading from the N-terminus, the 141-residue chain is DUF35 domain-containing scaffold protein (141 aa).

Positions 30, 33, 44, and 47 each coordinate Zn(2+).

The protein belongs to the scaffold protein DUF35 family. In terms of assembly, interacts with acetoacetyl-CoA thiolase and HMG-CoA synthase (HMGCS) that catalyzes the first and second step in the mevalonate pathway, respectively.

Functions as a scaffold to connect the acetoacetyl-CoA thiolase and HMG-CoA synthase (HMGCS) dimers in the channeling thiolase/HMGCS complex, which allows for efficient coupling of the endergonic thiolase reaction with the exergonic HMGCS reaction. This is DUF35 domain-containing scaffold protein from Methanocaldococcus jannaschii (strain ATCC 43067 / DSM 2661 / JAL-1 / JCM 10045 / NBRC 100440) (Methanococcus jannaschii).